The primary structure comprises 134 residues: Photosystem II assembly factor lipoprotein Psb27 (134 aa).

Positions 1 to 21 (MKRFWAMVCALFLSVSLLLTS) are cleaved as a signal peptide. Residue Cys-22 is the site of N-palmitoyl cysteine attachment. The S-diacylglycerol cysteine moiety is linked to residue Cys-22.

This sequence belongs to the Psb27 family. In terms of assembly, part of a photosystem II (PSII) assembly intermediate complex PSII-I; crystallized from a strain deleted of psbJ, it forms monomeric PSII before addition of the oxygen evolving complex. PSII-I includes 3 assembly factors not found in mature PSII (Psb27, Psb28 and Psb34). Binds to the lumenal side of PSII, adjacent to the CP43 (psbC) subunit.

The protein resides in the cellular thylakoid membrane. Plays a role in the repair and/or biogenesis of the calcium-manganese-oxide cluster on the lumenal face of the thylakoid membrane. Its presence in a photosystem II (PSII) preparation prevents binding of other extrinsic subunits PsbO, PsbU and PsbV, and thus assembly of calcium-manganese-oxide cluster. Psb27-containing complexes lack oxygen evolving activity and an oxidizable calcium-manganese-oxide cluster, but have a normal reaction center. The sequence is that of Photosystem II assembly factor lipoprotein Psb27 from Thermosynechococcus vestitus (strain NIES-2133 / IAM M-273 / BP-1).